The chain runs to 456 residues: Bifunctional protein GlmU (456 aa).

A pyrophosphorylase region spans residues 1-229 (MLNSAMSVVI…ISETDGVNNR (229 aa)). Residues 11–14 (LAAG), Lys25, Gln76, 81–82 (GT), 103–105 (YGD), Gly140, Glu154, Asn169, and Asn227 each bind UDP-N-acetyl-alpha-D-glucosamine. Residue Asp105 participates in Mg(2+) binding. Asn227 is a binding site for Mg(2+). A linker region spans residues 230–250 (LQLSRLERIYQAEQAEKLLLS). Residues 251 to 456 (GVMLRDPARF…QGWQRPVKKK (206 aa)) form an N-acetyltransferase region. Residues Arg333 and Lys351 each coordinate UDP-N-acetyl-alpha-D-glucosamine. Residue His363 is the Proton acceptor of the active site. UDP-N-acetyl-alpha-D-glucosamine-binding residues include Tyr366 and Asn377. Residues Ala380, 386 to 387 (NY), Ser405, Ala423, and Arg440 each bind acetyl-CoA.

The protein in the N-terminal section; belongs to the N-acetylglucosamine-1-phosphate uridyltransferase family. This sequence in the C-terminal section; belongs to the transferase hexapeptide repeat family. Homotrimer. Mg(2+) serves as cofactor.

Its subcellular location is the cytoplasm. The catalysed reaction is alpha-D-glucosamine 1-phosphate + acetyl-CoA = N-acetyl-alpha-D-glucosamine 1-phosphate + CoA + H(+). It catalyses the reaction N-acetyl-alpha-D-glucosamine 1-phosphate + UTP + H(+) = UDP-N-acetyl-alpha-D-glucosamine + diphosphate. Its pathway is nucleotide-sugar biosynthesis; UDP-N-acetyl-alpha-D-glucosamine biosynthesis; N-acetyl-alpha-D-glucosamine 1-phosphate from alpha-D-glucosamine 6-phosphate (route II): step 2/2. The protein operates within nucleotide-sugar biosynthesis; UDP-N-acetyl-alpha-D-glucosamine biosynthesis; UDP-N-acetyl-alpha-D-glucosamine from N-acetyl-alpha-D-glucosamine 1-phosphate: step 1/1. It functions in the pathway bacterial outer membrane biogenesis; LPS lipid A biosynthesis. Its function is as follows. Catalyzes the last two sequential reactions in the de novo biosynthetic pathway for UDP-N-acetylglucosamine (UDP-GlcNAc). The C-terminal domain catalyzes the transfer of acetyl group from acetyl coenzyme A to glucosamine-1-phosphate (GlcN-1-P) to produce N-acetylglucosamine-1-phosphate (GlcNAc-1-P), which is converted into UDP-GlcNAc by the transfer of uridine 5-monophosphate (from uridine 5-triphosphate), a reaction catalyzed by the N-terminal domain. This is Bifunctional protein GlmU from Salmonella choleraesuis (strain SC-B67).